Here is a 655-residue protein sequence, read N- to C-terminus: Interferon-induced GTP-binding protein Mx2 (655 aa).

Positions methionine 1–serine 18 are enriched in polar residues. The disordered stretch occupies residues methionine 1 to glutamine 28. Positions aspartate 60–proline 333 constitute a Dynamin-type G domain. A G1 motif region spans residues glycine 70–serine 77. Glycine 70 to serine 77 is a binding site for GTP. A G2 motif region spans residues valine 95 to arginine 97. Positions aspartate 171–glycine 174 are G3 motif. Residues aspartate 171–isoleucine 175 and threonine 240–aspartate 243 each bind GTP. The segment at threonine 240–aspartate 243 is G4 motif. The interval lysine 272–glycine 275 is G5 motif. Residues glutamate 542–leucine 562 form a disordered region. The segment covering glycine 552–leucine 562 has biased composition (low complexity). The GED domain maps to methionine 567–glycine 655.

This sequence belongs to the TRAFAC class dynamin-like GTPase superfamily. Dynamin/Fzo/YdjA family.

The protein localises to the cytoplasm. Its function is as follows. Interferon-induced dynamin-like GTPase with antiviral activity against vesicular stomatitis virus (VSV) and Hantaan virus (HNTV). This chain is Interferon-induced GTP-binding protein Mx2 (Mx2), found in Mus musculus (Mouse).